The sequence spans 245 residues: Geranylgeranylglyceryl phosphate synthase (245 aa).

Aspartate 24 and serine 54 together coordinate Mg(2+). Sn-glycerol 1-phosphate-binding positions include 172 to 178 (YLEAGSG), 203 to 204 (GG), and 225 to 226 (GT).

It belongs to the GGGP/HepGP synthase family. Group II subfamily. It depends on Mg(2+) as a cofactor.

It is found in the cytoplasm. The enzyme catalyses sn-glycerol 1-phosphate + (2E,6E,10E)-geranylgeranyl diphosphate = sn-3-O-(geranylgeranyl)glycerol 1-phosphate + diphosphate. It functions in the pathway membrane lipid metabolism; glycerophospholipid metabolism. Functionally, prenyltransferase that catalyzes the transfer of the geranylgeranyl moiety of geranylgeranyl diphosphate (GGPP) to the C3 hydroxyl of sn-glycerol-1-phosphate (G1P). This reaction is the first ether-bond-formation step in the biosynthesis of archaeal membrane lipids. This chain is Geranylgeranylglyceryl phosphate synthase, found in Staphylothermus marinus (strain ATCC 43588 / DSM 3639 / JCM 9404 / F1).